A 114-amino-acid chain; its full sequence is Astacin-like metalloprotease toxin 4 (114 aa).

A Peptidase M12A domain is found at arginine 1–valine 114. Residues cysteine 17 and cysteine 38 are joined by a disulfide bond. Residue histidine 46 participates in Zn(2+) binding. The active site involves glutamate 47. Zn(2+) contacts are provided by histidine 50 and histidine 56. A glycan (N-linked (GlcNAc...) asparagine) is linked at asparagine 88.

In terms of assembly, monomer. The cofactor is Zn(2+). In terms of tissue distribution, expressed by the venom gland.

It localises to the secreted. Inhibited by 1,10-phenanthroline. In terms of biological role, zinc metalloprotease. Provoques deadhesion of endothelial cells from cell cultures, and also degradation of fibronectin, fibrinogen and gelatin in vitro. Its role in the venom is not fully understood but it might act as a spreading factor that facilitates diffusion of other venom toxins. Alternatively, it might be involved in the proteolytic processing of other venom toxins or it might play a role in extra-oral digestion of prey. In Loxosceles laeta (South American recluse spider), this protein is Astacin-like metalloprotease toxin 4.